The primary structure comprises 490 residues: ATP synthase subunit beta (490 aa).

175–182 (GGAGVGKT) provides a ligand contact to ATP.

The protein belongs to the ATPase alpha/beta chains family. F-type ATPases have 2 components, CF(1) - the catalytic core - and CF(0) - the membrane proton channel. CF(1) has five subunits: alpha(3), beta(3), gamma(1), delta(1), epsilon(1). CF(0) has three main subunits: a(1), b(2) and c(9-12). The alpha and beta chains form an alternating ring which encloses part of the gamma chain. CF(1) is attached to CF(0) by a central stalk formed by the gamma and epsilon chains, while a peripheral stalk is formed by the delta and b chains.

The protein localises to the cell membrane. The catalysed reaction is ATP + H2O + 4 H(+)(in) = ADP + phosphate + 5 H(+)(out). Its function is as follows. Produces ATP from ADP in the presence of a proton gradient across the membrane. The catalytic sites are hosted primarily by the beta subunits. The sequence is that of ATP synthase subunit beta from Acidothermus cellulolyticus (strain ATCC 43068 / DSM 8971 / 11B).